The primary structure comprises 543 residues: Periplasmic oligopeptide-binding protein OppA (543 aa).

Residues 1-26 form the signal peptide; it reads MTNITKRSLVAAGVLAALMAGNVALA. Cys-297 and Cys-443 are disulfide-bonded.

Belongs to the bacterial solute-binding protein 5 family. As to quaternary structure, the complex is composed of two ATP-binding proteins (OppD and OppF), two transmembrane proteins (OppB and OppC) and a solute-binding protein (OppA).

The protein localises to the periplasm. Its function is as follows. Part of the ABC transporter complex OppABCDF involved in the uptake of oligopeptides. Plays an important nutritional role. Binds peptides containing from two to five amino acid residues. Displays a preference for tripeptides and tetrapeptides over dipeptides and pentapeptides, for peptides composed of L-amino acids and for positively charged peptides. Cannot bind the cell wall peptide L-Ala-D-Gly-gamma-meso-diaminopimelic acid. In Escherichia coli (strain K12), this protein is Periplasmic oligopeptide-binding protein OppA.